The chain runs to 140 residues: UPF0134 protein MPN_130 (140 aa).

Belongs to the UPF0134 family.

The chain is UPF0134 protein MPN_130 from Mycoplasma pneumoniae (strain ATCC 29342 / M129 / Subtype 1) (Mycoplasmoides pneumoniae).